The sequence spans 196 residues: ATP-dependent Clp protease proteolytic subunit (196 aa).

Ser101 serves as the catalytic Nucleophile. The active site involves His126.

It belongs to the peptidase S14 family. In terms of assembly, component of the chloroplastic Clp protease core complex.

The protein localises to the plastid. The protein resides in the chloroplast stroma. The enzyme catalyses Hydrolysis of proteins to small peptides in the presence of ATP and magnesium. alpha-casein is the usual test substrate. In the absence of ATP, only oligopeptides shorter than five residues are hydrolyzed (such as succinyl-Leu-Tyr-|-NHMec, and Leu-Tyr-Leu-|-Tyr-Trp, in which cleavage of the -Tyr-|-Leu- and -Tyr-|-Trp bonds also occurs).. Functionally, cleaves peptides in various proteins in a process that requires ATP hydrolysis. Has a chymotrypsin-like activity. Plays a major role in the degradation of misfolded proteins. This is ATP-dependent Clp protease proteolytic subunit from Vitis vinifera (Grape).